Consider the following 627-residue polypeptide: Zinc finger protein 256 (627 aa).

One can recognise a KRAB domain in the interval Val14–Gly96. Residues Gly55–Gln76 form a disordered region. Residues Tyr65–Ser75 show a composition bias toward polar residues. 15 C2H2-type zinc fingers span residues Asn90–His112, Tyr239–His261, Tyr267–His289, His295–His317, Tyr323–His345, Tyr351–His373, Tyr379–His401, Tyr407–His429, His435–His457, Tyr463–His485, Tyr491–His513, Tyr519–His541, Tyr547–His569, Tyr575–His597, and Tyr603–His625.

This sequence belongs to the krueppel C2H2-type zinc-finger protein family. Interacts with TRIM28.

The protein localises to the nucleus. In terms of biological role, transcriptional repressor that plays a role in cell proliferation. Requires TRIM28 for its activity. The protein is Zinc finger protein 256 (ZNF256) of Homo sapiens (Human).